The chain runs to 324 residues: PDZ domain-containing protein MAGIX (324 aa).

Residues 1 to 26 (MDSRAGNTADPRGGRRGGGLQGSRSP) are disordered. Residues 128 to 212 (SVELTRGPAG…HLCLVLQRPQ (85 aa)) form the PDZ domain. The segment covering 216–241 (GSRIKEVGGHRKTDRSLDPRGSRVES) has biased composition (basic and acidic residues). The segment at 216–263 (GSRIKEVGGHRKTDRSLDPRGSRVESRSTISPVHHRPKTRTSPRPSPE) is disordered. S261 carries the phosphoserine modification.

The sequence is that of PDZ domain-containing protein MAGIX (Magix) from Mus musculus (Mouse).